Here is a 113-residue protein sequence, read N- to C-terminus: Transcriptional regulator RamA (113 aa).

The 99-residue stretch at 9 to 107 folds into the HTH araC/xylS-type domain; the sequence is DTIVEWIDDN…NLPPGAYRKE (99 aa). DNA-binding regions (H-T-H motif) lie at residues 26-47 and 74-97; these read DDIA…MQYK and VYDI…TRTF.

Transcriptional regulator. Binds to regulatory regions of target genes, including efflux pump operon acrAB and outer membrane protein gene tolC. Represses transcription of genes belonging to the flagellar regulon, including flhD, flhB and fliC; probably thereby leading to repression of motility. Represses expression of the flhDC operon in a post-transcriptional manner. Activates expression of acrAB, perhaps thereby conferring multidrug resistance. Involved in indole- and bile-mediated regulation of acrAB; binding of bile to RamA may contribute to activation of expression of acrAB. Plays a role in regulating virulence in mice. The polypeptide is Transcriptional regulator RamA (Salmonella typhimurium (strain LT2 / SGSC1412 / ATCC 700720)).